A 459-amino-acid polypeptide reads, in one-letter code: tRNA modification GTPase MnmE (459 aa).

Residues arginine 20, glutamate 85, and arginine 124 each coordinate (6S)-5-formyl-5,6,7,8-tetrahydrofolate. Residues 221-380 (GLSTVIIGRP…LEEAIQSLFY (160 aa)) form the TrmE-type G domain. Asparagine 231 is a binding site for K(+). GTP is bound by residues 231–236 (NVGKSS), 250–256 (TDIPGTT), and 275–278 (DTAG). Serine 235 provides a ligand contact to Mg(2+). 3 residues coordinate K(+): threonine 250, isoleucine 252, and threonine 255. Threonine 256 contributes to the Mg(2+) binding site. Lysine 459 contacts (6S)-5-formyl-5,6,7,8-tetrahydrofolate.

The protein belongs to the TRAFAC class TrmE-Era-EngA-EngB-Septin-like GTPase superfamily. TrmE GTPase family. In terms of assembly, homodimer. Heterotetramer of two MnmE and two MnmG subunits. K(+) serves as cofactor.

The protein localises to the cytoplasm. In terms of biological role, exhibits a very high intrinsic GTPase hydrolysis rate. Involved in the addition of a carboxymethylaminomethyl (cmnm) group at the wobble position (U34) of certain tRNAs, forming tRNA-cmnm(5)s(2)U34. In Bacillus subtilis (strain 168), this protein is tRNA modification GTPase MnmE.